The chain runs to 266 residues: Undecaprenyl-diphosphatase (266 aa).

8 consecutive transmembrane segments (helical) span residues 1–21, 39–59, 87–107, 115–135, 144–164, 183–203, 218–238, and 246–266; these read MDTF…FLPI, QGLS…VMYF, WWII…KDFI, AVIA…DRMF, VGWK…IPGT, AAAR…AILV, ALSL…HLFL, and MTPF…FMFA.

This sequence belongs to the UppP family.

It is found in the cell inner membrane. The catalysed reaction is di-trans,octa-cis-undecaprenyl diphosphate + H2O = di-trans,octa-cis-undecaprenyl phosphate + phosphate + H(+). Its function is as follows. Catalyzes the dephosphorylation of undecaprenyl diphosphate (UPP). Confers resistance to bacitracin. This chain is Undecaprenyl-diphosphatase, found in Shewanella sediminis (strain HAW-EB3).